The primary structure comprises 686 residues: MTPGSRSACRWALLLLAVLWPQQRAAGSGIFQLRLQEFANERGMLANGRPCEPGCRTFFRICLKHYQATFSEGPCTFGNVSTPVLGTNSFVIRDKNSGSGRNPLQLPFNFTWPGTFSLNIQAWHTPGDDLRPETSPGNSLISQIIIQGSLAVGKNWKSDEQNNTLTRLRYSYRVVCSDNYYGDSCSRLCKKRDDHFGHYECQPDGSLSCLPGWTGKYCDQPICLSGCHEQNGYCSKPDECNCRPGWQGPLCNECIPHNGCRHGTCTIPWQCACDEGWGGLFCDQDLNYCTHHSPCKNGSTCSNSGPRGYTCTCLPGYTGEHCELELSKCASNPCRNGGSCKDHENSYHCLCPPGYYGQHCEHSTLTCADSPCFNGGSCRERNQGASYACECPPNFTGSNCEKKVDRCTSNPCANGGQCLNRGPSRTCRCRPGFTGTHCELHISDCARSPCAHGGTCHDLENGPVCTCPAGFSGRRCEVRITNDACASGPCFNGATCYTGLSPNNFVCNCPYGFVGSRCEFPVGLPPSFPWVAVSLGVGLVVLLVLLVMVAVAVRQLRLRRPDDDSREAMNNLSDFQKDNLIPAAQLKNTNQKKELEVDCGLDKSNCGKLQNHTLDYNLAPGFLGRGSTPGKYPHSDKSLGEKVPLRLHSEKPACRISAICSPRDSMYQSVCLISEERNECVIATEV.

The N-terminal stretch at 1–27 (MTPGSRSACRWALLLLAVLWPQQRAAG) is a signal peptide. Topologically, residues 28–530 (SGIFQLRLQE…PVGLPPSFPW (503 aa)) are extracellular. Cystine bridges form between C51–C55 and C62–C75. Residues N79, N109, and N162 are each glycosylated (N-linked (GlcNAc...) asparagine). The region spanning 174–218 (VVCSDNYYGDSCSRLCKKRDDHFGHYECQPDGSLSCLPGWTGKYC) is the DSL domain. Cysteines 176 and 185 form a disulfide. Interaction with Notch1 regions lie at residues 186-188 (SRL) and 192-196 (RDDHF). Intrachain disulfides connect C189/C201, C209/C218, C223/C234, C227/C240, C242/C251, C254/C265, C260/C271, C273/C282, C289/C301, C295/C311, C313/C322, C329/C340, C334/C349, C351/C360, C367/C378, C372/C389, C391/C400, C407/C418, C412/C427, C429/C438, C445/C456, C450/C465, C467/C476, C485/C496, C490/C507, and C509/C518. EGF-like domains lie at 219 to 252 (DQPI…PLCN), 256 to 283 (PHNG…LFCD), 285 to 323 (DLNY…EHCE), 325 to 361 (ELSK…QHCE), 363 to 401 (STLT…SNCE), 403 to 439 (KVDR…THCE), 441 to 477 (HISD…RRCE), and 481 to 519 (TNDA…SRCE). A helical membrane pass occupies residues 531–551 (VAVSLGVGLVVLLVLLVMVAV). Over 552–686 (AVRQLRLRRP…RNECVIATEV (135 aa)) the chain is Cytoplasmic.

In terms of assembly, interacts with NOTCH4. Interacts (via N-terminal DSL and MNNL domains) with NOTCH1 (via EGF-like domains).

It is found in the cell membrane. In terms of biological role, involved in the Notch signaling pathway as Notch ligand. Activates NOTCH1 and NOTCH4. Involved in angiogenesis; negatively regulates endothelial cell proliferation and migration and angiogenic sprouting. Essential for retinal progenitor proliferation. Required for suppressing rod fates in late retinal progenitors as well as for proper generation of other retinal cell types. During spinal cord neurogenesis, inhibits V2a interneuron fate. The polypeptide is Delta-like protein 4 (Rattus norvegicus (Rat)).